The sequence spans 237 residues: Uridylate kinase (237 aa).

12–15 contributes to the ATP binding site; that stretch reads KLSG. Residues 20-25 are involved in allosteric activation by GTP; sequence GDEGFG. Position 54 (Gly54) interacts with UMP. Residues Gly55 and Arg59 each contribute to the ATP site. UMP-binding positions include Asp74 and 135–142; that span reads TGSPFFTT. The ATP site is built by Thr162, Tyr168, and Asp171.

This sequence belongs to the UMP kinase family. In terms of assembly, homohexamer.

It localises to the cytoplasm. It carries out the reaction UMP + ATP = UDP + ADP. The protein operates within pyrimidine metabolism; CTP biosynthesis via de novo pathway; UDP from UMP (UMPK route): step 1/1. Allosterically activated by GTP. Inhibited by UTP. In terms of biological role, catalyzes the reversible phosphorylation of UMP to UDP. This is Uridylate kinase from Haemophilus ducreyi (strain 35000HP / ATCC 700724).